A 364-amino-acid chain; its full sequence is Probable UDP-arabinopyranose mutase 1 (364 aa).

Residues 103–105 (DDD) carry the DXD motif motif. N-linked (Glc...) arginine glycosylation occurs at Arg151.

This sequence belongs to the RGP family. In terms of assembly, homopentamer or homohexamer. Mn(2+) is required as a cofactor. Mg(2+) serves as cofactor. In terms of processing, reversibly glycosylated by UDP-glucose, UDP-xylose and UDP-galactose, but not UDP-mannose.

It localises to the secreted. The protein localises to the cell wall. The protein resides in the cell junction. Its subcellular location is the plasmodesma. It is found in the golgi apparatus. It catalyses the reaction UDP-beta-L-arabinofuranose = UDP-beta-L-arabinopyranose. Its activity is regulated as follows. Inhibited by inhibitor protein (IP) which may be a form of sucrose synthase. Its function is as follows. Probable UDP-L-arabinose mutase involved in the biosynthesis of cell wall non-cellulosic polysaccharides. Was initially shown to possess an autoglycosylating activity which is dependent on the presence of UDP-glucose and manganese. The chain is Probable UDP-arabinopyranose mutase 1 from Pisum sativum (Garden pea).